The chain runs to 439 residues: Secreted RxLR effector protein 117 (439 aa).

Positions 1–21 (MRGAYYVLAALLVVASSQIAA) are cleaved as a signal peptide. Residues 48-65 (RYLRGGHDVHDDSANEER) carry the RxLR-dEER motif.

The protein belongs to the RxLR effector family.

It localises to the secreted. It is found in the host nucleus. Functionally, secreted effector that acts as an elicitor that induces cell death in host plant cells. This chain is Secreted RxLR effector protein 117, found in Plasmopara viticola (Downy mildew of grapevine).